Reading from the N-terminus, the 473-residue chain is tRNA-2-methylthio-N(6)-dimethylallyladenosine synthase (473 aa).

A disordered region spans residues 1-21 (MTQDSALLQAPEAIPSESLRD). Positions 26–146 (RKVFIKTYGC…LPEALRRAKQ (121 aa)) constitute an MTTase N-terminal domain. C35, C71, C109, C187, C191, and C194 together coordinate [4Fe-4S] cluster. Residues 173 to 405 (RARGVTAFLT…QMLLLKQQQE (233 aa)) form the Radical SAM core domain. The 63-residue stretch at 408–470 (ESCVGKEIDL…TNSLFAEHAE (63 aa)) folds into the TRAM domain.

This sequence belongs to the methylthiotransferase family. MiaB subfamily. In terms of assembly, monomer. It depends on [4Fe-4S] cluster as a cofactor.

It localises to the cytoplasm. It carries out the reaction N(6)-dimethylallyladenosine(37) in tRNA + (sulfur carrier)-SH + AH2 + 2 S-adenosyl-L-methionine = 2-methylsulfanyl-N(6)-dimethylallyladenosine(37) in tRNA + (sulfur carrier)-H + 5'-deoxyadenosine + L-methionine + A + S-adenosyl-L-homocysteine + 2 H(+). Functionally, catalyzes the methylthiolation of N6-(dimethylallyl)adenosine (i(6)A), leading to the formation of 2-methylthio-N6-(dimethylallyl)adenosine (ms(2)i(6)A) at position 37 in tRNAs that read codons beginning with uridine. The chain is tRNA-2-methylthio-N(6)-dimethylallyladenosine synthase from Rhizobium johnstonii (strain DSM 114642 / LMG 32736 / 3841) (Rhizobium leguminosarum bv. viciae).